A 272-amino-acid chain; its full sequence is Hydroxyethylthiazole kinase (272 aa).

A substrate-binding site is contributed by Met-62. ATP-binding residues include Arg-138 and Thr-183. Gly-210 provides a ligand contact to substrate.

This sequence belongs to the Thz kinase family. Mg(2+) serves as cofactor.

It catalyses the reaction 5-(2-hydroxyethyl)-4-methylthiazole + ATP = 4-methyl-5-(2-phosphooxyethyl)-thiazole + ADP + H(+). It participates in cofactor biosynthesis; thiamine diphosphate biosynthesis; 4-methyl-5-(2-phosphoethyl)-thiazole from 5-(2-hydroxyethyl)-4-methylthiazole: step 1/1. In terms of biological role, catalyzes the phosphorylation of the hydroxyl group of 4-methyl-5-beta-hydroxyethylthiazole (THZ). This chain is Hydroxyethylthiazole kinase, found in Dichelobacter nodosus (strain VCS1703A).